Here is a 487-residue protein sequence, read N- to C-terminus: MKYKDLRDFIKILEHRGDLKRIKFPINPDLEITEIADRTIKSGGPALFFENPTGYTIPVLCNLFGTPNRIALGMGKESILSLRDVGKLLAFLREPELPTGVHDFFSKIPHFRHILHMPIKRVSTAPCQENVWCNQDVDITHMPIMRCWPQDVSPVITWGITITRGLKSKRQNLGIYRQQVLSKNKIIMRWLSHRGGALDFQEWHKNTSERRFPITVALGADPATLIGAVVPIPDTLSEYAFSGLLRGCRTEVIKCISCDLDVPANSEIVLEGYLERDETAIEGPFGDHTGYYNTTAKFPVCTITHITQRNNPIYLSTYTGRPPDEPAILGMAMNEMFIPIIQKQFPEITDFYLPPEGCSYRLAIVTIKKQYIGHAKRIIFGIWSFLKQFMYTKFIIVCDDDINARDWNDVVWAITTRMEPDRDTIIVKNTPIDYLDFSSPISGLGSKIGMDATNKWPGETEREWGIPIKMHDTVRHYIDSIWDKLDI.

Position 172 (N172) interacts with Mn(2+). Prenylated FMN contacts are provided by residues 175–177, 189–191, and 194–195; these read IYR, RWL, and RG. E238 is a binding site for Mn(2+). The Proton donor role is filled by D287.

This sequence belongs to the UbiD family. In terms of assembly, homohexamer. The cofactor is prenylated FMN. Mn(2+) is required as a cofactor.

It localises to the cell membrane. The enzyme catalyses a 4-hydroxy-3-(all-trans-polyprenyl)benzoate + H(+) = a 2-(all-trans-polyprenyl)phenol + CO2. It functions in the pathway cofactor biosynthesis; ubiquinone biosynthesis. Catalyzes the decarboxylation of 3-octaprenyl-4-hydroxy benzoate to 2-octaprenylphenol, an intermediate step in ubiquinone biosynthesis. This is 3-octaprenyl-4-hydroxybenzoate carboxy-lyase from Blochmanniella pennsylvanica (strain BPEN).